Consider the following 270-residue polypeptide: Regulator of G-protein signaling rgs-10 (270 aa).

The region spanning 135 to 252 is the RGS domain; it reads SPETLAASEY…LEDPLYLDLV (118 aa).

In terms of biological role, shown to have a role in viability and embryogenesis. The chain is Regulator of G-protein signaling rgs-10 (rgs-10) from Caenorhabditis elegans.